We begin with the raw amino-acid sequence, 335 residues long: Mesoderm-specific transcript homolog protein (335 aa).

Transmembrane regions (helical) follow at residues 13–33 and 63–83; these read WWVQ…HIPP and VGVV…TSSY. The AB hydrolase-1 domain maps to 71–310; the sequence is IVVLLHGFPT…PRSTVSILDD (240 aa). An RVIALD motif is present at residues 98-103; the sequence is RVIALD. A glycan (N-linked (GlcNAc...) asparagine) is linked at N163. A helical membrane pass occupies residues 266-286; that stretch reads VGALASVTIPIHFIYGPLDPV.

Belongs to the AB hydrolase superfamily. Highly expressed in hydatidiform moles, but barely expressed in dermoid cysts. Biallelic expression is detected in blood lymphocytes. Seems to imprinted in an isoform-specific manner rather than in a tissue-specific manner in lymphocytes. Isoform 1 is expressed only from the paternal allele. Isoform 2 is expressed from both the paternal allele and the maternal allele.

Its subcellular location is the endoplasmic reticulum membrane. This chain is Mesoderm-specific transcript homolog protein (MEST), found in Homo sapiens (Human).